Consider the following 663-residue polypeptide: DNA ligase (663 aa).

NAD(+) contacts are provided by residues 31-35 (DYEYD), 80-81 (SL), and glutamate 109. The active-site N6-AMP-lysine intermediate is lysine 111. Positions 132, 167, 283, and 307 each coordinate NAD(+). Zn(2+) contacts are provided by cysteine 401, cysteine 404, cysteine 419, and cysteine 424. The 78-residue stretch at 586–663 (KIDNRFLGKT…TEEDLKDMIK (78 aa)) folds into the BRCT domain.

It belongs to the NAD-dependent DNA ligase family. LigA subfamily. Requires Mg(2+) as cofactor. It depends on Mn(2+) as a cofactor.

The catalysed reaction is NAD(+) + (deoxyribonucleotide)n-3'-hydroxyl + 5'-phospho-(deoxyribonucleotide)m = (deoxyribonucleotide)n+m + AMP + beta-nicotinamide D-nucleotide.. Functionally, DNA ligase that catalyzes the formation of phosphodiester linkages between 5'-phosphoryl and 3'-hydroxyl groups in double-stranded DNA using NAD as a coenzyme and as the energy source for the reaction. It is essential for DNA replication and repair of damaged DNA. The polypeptide is DNA ligase (Clostridium kluyveri (strain NBRC 12016)).